The chain runs to 92 residues: Sperm-specific protein Phi-1 (92 aa).

Residues 1–92 form a disordered region; sequence MPSPTRRSSK…RVRAKKKKKK (92 aa). Basic residues-rich tracts occupy residues 7–19 and 29–92; these read RSSKSRSKSRSRS and AAKR…KKKK.

As to expression, sperm.

It is found in the nucleus. The protein localises to the chromosome. Its function is as follows. Involved in nuclear basic protein transition: histones are replaced by spermatid specific proteins which are themselves replaced by protamines in late spermatids. This chain is Sperm-specific protein Phi-1, found in Mytilus edulis (Blue mussel).